Consider the following 409-residue polypeptide: MVDFKTVQAFDFQGKTVVLRADLNVPMKDGVITDNERILASLDTIKYLLGHNCKIVLLSHLSRVKSLDDKKGKKSLQPVASALQNLLKNTKVHFCPENTGDKVKVAVNQLPLGEILVLENTRYCDVNEAGEVVKHESKNNAELAQFWASLGDIFVNDAFGTAHRRHASNAGIAKYIKNSCIGLLMERELINLYRLINNPPKPFVVVLGGAKVSDKLQVVNNLFKIADHILIGGGMVNTFLKALGNEVGTSLVEEDLVQTAKQILDSDKDKKIVLGVDQMLHASFKDEPGVECVVAPQWPAELQGFMSLDVGSKTVALFSSYLAKAKTIFWNGPMGVFEFSNYAQGTLAIGKAIAQNQQAFSVIGGGDSAAAAKQLQIADQFSFISTGGGASLALIGGEELVGISDIQKK.

Substrate is bound by residues 22-24 (DLN), Arg37, 60-63 (HLSR), Arg122, and Arg164. ATP is bound by residues Lys215, Glu338, and 365 to 368 (GGDS).

The protein belongs to the phosphoglycerate kinase family. As to quaternary structure, monomer.

It localises to the cytoplasm. It catalyses the reaction (2R)-3-phosphoglycerate + ATP = (2R)-3-phospho-glyceroyl phosphate + ADP. It functions in the pathway carbohydrate degradation; glycolysis; pyruvate from D-glyceraldehyde 3-phosphate: step 2/5. The protein is Phosphoglycerate kinase (pgk) of Mycoplasma pneumoniae (strain ATCC 29342 / M129 / Subtype 1) (Mycoplasmoides pneumoniae).